Consider the following 58-residue polypeptide: SPbeta prophage-derived uncharacterized protein YonT (58 aa).

Residues 6–26 traverse the membrane as a helical segment; it reads GIVVAFLISLTVLTINSLTIV. Residues 35–58 are disordered; that stretch reads GTSKKKKRIRKRLRPKRQRQRIRR. Basic residues predominate over residues 36–58; the sequence is TSKKKKRIRKRLRPKRQRQRIRR.

It is found in the cell membrane. This Bacillus subtilis (strain 168) protein is SPbeta prophage-derived uncharacterized protein YonT (yonT).